Consider the following 298-residue polypeptide: Probable oxidoreductase (298 aa).

9–33 (VVTGGASGLGAETVRALAAAGAEVT) is a binding site for NAD(+). Ser139 contributes to the substrate binding site. The Proton acceptor role is filled by Tyr165.

Belongs to the short-chain dehydrogenases/reductases (SDR) family.

The polypeptide is Probable oxidoreductase (Streptomyces antibioticus).